The following is a 669-amino-acid chain: RNA-binding protein 14 (669 aa).

RRM domains follow at residues 1 to 73 and 79 to 149; these read MKIF…MSRP and WKIF…LSTK. Residues Lys126, Lys135, Lys138, Lys149, and Lys153 each participate in a glycyl lysine isopeptide (Lys-Gly) (interchain with G-Cter in SUMO2) cross-link. Disordered regions lie at residues 148-175 and 193-232; these read TKGQ…DTAF and NSTG…PLTA. Residue Ser161 is modified to Phosphoserine. Residue Lys164 is modified to N6-acetyllysine; alternate. Lys164 is covalently cross-linked (Glycyl lysine isopeptide (Lys-Gly) (interchain with G-Cter in SUMO2); alternate). Residue Thr206 is modified to Phosphothreonine. Residues Ser220, Ser242, Ser244, Ser256, Ser272, and Ser280 each carry the phosphoserine modification. A disordered region spans residues 284–303; the sequence is PYRGQLASPSSQSAAASSLG. Residues 287-303 are compositionally biased toward low complexity; sequence GQLASPSSQSAAASSLG. A TRBP-interacting domain; interaction with STIL region spans residues 307–354; it reads GAQPSASALSSYGGQPAAASSLNSYGAQGSSLASYGNQPSSYGAQAAS. 4 positions are modified to phosphoserine: Ser520, Ser523, Ser527, and Ser562. A disordered region spans residues 569–590; that stretch reads ANSTPPPYERTRLSPPRASYDD. Residue Thr572 is modified to Phosphothreonine. Residue Ser582 is modified to Phosphoserine. A Glycyl lysine isopeptide (Lys-Gly) (interchain with G-Cter in SUMO2) cross-link involves residue Lys600. A phosphoserine mark is found at Ser618, Ser620, Ser623, Ser627, Ser643, and Ser649.

In terms of assembly, interacts with NCOA6, CITED1 and XRCC5/KU86. Interacts with SS18. Interacts with STIL and interferes with its interaction with CPAP. Interacts with gamma-tubulin. Part of the HDP-RNP complex composed of at least HEXIM1, PRKDC, XRCC5, XRCC6, paraspeckle proteins (SFPQ, NONO, PSPC1, RBM14, and MATR3) and NEAT1 RNA.

The protein resides in the nucleus. Its subcellular location is the nucleolus. The protein localises to the cytoplasm. Functionally, may function as a nuclear receptor coactivator, enhancing transcription through other coactivators such as NCOA6 and CITED1. Regulates centriole biogenesis by suppressing the formation of aberrant centriolar protein complexes in the cytoplasm and thus preserving mitotic spindle integrity. Prevents the formation of the STIL-CPAP complex (which can induce the formation of aberrant centriolar protein complexes) by interfering with the interaction of STIL with CPAP. Plays a role in the regulation of DNA virus-mediated innate immune response by assembling into the HDP-RNP complex, a complex that serves as a platform for IRF3 phosphorylation and subsequent innate immune response activation through the cGAS-STING pathway. The sequence is that of RNA-binding protein 14 (RBM14) from Bos taurus (Bovine).